The sequence spans 414 residues: Autophagy-related protein 18 (414 aa).

WD repeat units lie at residues 1-36 (MAMN…KSYE), 69-114 (KRQS…LLYT), 185-225 (AHRS…KLYQ), and 230-269 (SIPS…SSRE). Positions 226–230 (FRRGS) match the L/FRRG motif motif. Positions 261–314 (LSHQTSSREGSPSSALSRERAASQSSLGTSPDPDDPTDDMESSEIASRKHNGTL) are disordered. Residues 262–289 (SHQTSSREGSPSSALSRERAASQSSLGT) are compositionally biased toward polar residues. A compositionally biased stretch (acidic residues) spans 292-302 (DPDDPTDDMES). WD repeat units lie at residues 309–355 (KHNG…AWIK) and 367–407 (GNAG…GGEG).

Belongs to the WD repeat PROPPIN family. As to quaternary structure, component of the PI(3,5)P2 regulatory complex.

Its subcellular location is the preautophagosomal structure membrane. It localises to the vacuole membrane. The protein resides in the endosome membrane. In terms of biological role, the PI(3,5)P2 regulatory complex regulates both the synthesis and turnover of phosphatidylinositol 3,5-bisphosphate (PtdIns(3,5)P2). Necessary for proper vacuole morphology. Plays an important role in osmotically-induced vacuole fragmentation. Required for cytoplasm to vacuole transport (Cvt) vesicle formation, pexophagy and starvation-induced autophagy. Involved in correct atg9 trafficking to the pre-autophagosomal structure. Might also be involved in premeiotic DNA replication. This chain is Autophagy-related protein 18 (atg18), found in Aspergillus terreus (strain NIH 2624 / FGSC A1156).